A 690-amino-acid polypeptide reads, in one-letter code: MPVPTPLSEGTTPDTAAQELRTNRLWEALPGLSYGGDYIPNSGRNRSARKIYRSCRKPECRPSALASSPGLGLEPVEGSYDFTWLDEVMDNLAATGIKVALATATAAPPAGWLRKHPEILPVTAEGSTLGPARAHYLVVGMVLFCRPVCGEDDPRLGERYKDHPALALWHVDNELGCHVSEFYGPRRHRRFPSMAEPTLRHDRGPQRGLGTAFWSQRYSCFEEILTPRPAPTTLNPTQQLDFQRFSSWGLIDFYSMLARGHFARSHPRCPPRQIWWPQAPPCLWDYFDWAKKLECHRQWSLPGGRRYRCVTSELAFRRRSDSEAIAGGKPWSPDGALSPCRPCNWLASQHDSRTPGEMARNSLVHVGRGIWMLSCFSSGDRASRVRRNSTRPWCRTPEPTREYGVKLLSWAQAQSLVRGSRRRGGITHRNRLRLRTLVGKRTGLHPAPMWKYLELLRAFHAPCSCPASPPIWSIPALTLTAMTWWSSRPCTPSPMPRPAILRQRQNAEPQCSSATSVDIDENDAVRLGGYPGAFRDLLGVNVEEFHPLPENSTVSLDAGWSGRIWSEHVHLTGAEAKVSFTEAPLTGVPAVTRHAVGTGAAWYLATFPDATGLESLLDSLIAESGVRAPAMAAAGVELSRRSHADGRSYLFAINHNVTEAAVSAQGTELISGTPFNGTVPAGAVAVIAEG.

N173 contacts substrate. The active-site Proton donor is E174. A substrate-binding site is contributed by W345.

It belongs to the glycosyl hydrolase 42 family.

It carries out the reaction Hydrolysis of terminal non-reducing beta-D-galactose residues in beta-D-galactosides.. With respect to regulation, activity stimulated by beta-mercaptoethanol. Functionally, highly specific towards beta-D-galactoside substrates. Hydrolyzes 5-bromo-4-chloro-3-indolyl-beta-D-galactopyranoside (X-Gal) and o-nitrophenyl-beta-D-galactopyranoside (ONPG). Has activity against p-nitrophenyl(pNP)-beta-D-galactoside, but not significantly at all towards pNP-alpha-D-galactoside, pNP-beta-D-glucoside, pNP-beta-D-mannoside, pNP-beta-L-fucoside, pNP-beta-D-xyloside, pNP-beta-L-arabinoside, pNP-beta-D-galuronide, pNP-beta-D-glucuronide, pNP-beta-D-lactoside or pNP-beta-D-cellobioside. This chain is Beta-galactosidase, found in Arthrobacter sp.